The primary structure comprises 33 residues: Photosystem II reaction center protein T (33 aa).

Residues 3 to 23 (ALVYTFLLVSTLGIIFFAIFF) form a helical membrane-spanning segment.

The protein belongs to the PsbT family. In terms of assembly, PSII is composed of 1 copy each of membrane proteins PsbA, PsbB, PsbC, PsbD, PsbE, PsbF, PsbH, PsbI, PsbJ, PsbK, PsbL, PsbM, PsbT, PsbY, PsbZ, Psb30/Ycf12, at least 3 peripheral proteins of the oxygen-evolving complex and a large number of cofactors. It forms dimeric complexes.

It is found in the plastid. The protein resides in the chloroplast thylakoid membrane. Found at the monomer-monomer interface of the photosystem II (PS II) dimer, plays a role in assembly and dimerization of PSII. PSII is a light-driven water plastoquinone oxidoreductase, using light energy to abstract electrons from H(2)O, generating a proton gradient subsequently used for ATP formation. The polypeptide is Photosystem II reaction center protein T (Asparagus officinalis (Garden asparagus)).